The chain runs to 187 residues: Cell division protein SepF (187 aa).

The protein belongs to the SepF family. Homodimer. Interacts with FtsZ.

It is found in the cytoplasm. Functionally, cell division protein that is part of the divisome complex and is recruited early to the Z-ring. Probably stimulates Z-ring formation, perhaps through the cross-linking of FtsZ protofilaments. Its function overlaps with FtsA. The protein is Cell division protein SepF of Streptococcus suis (strain 98HAH33).